A 96-amino-acid polypeptide reads, in one-letter code: Muconolactone Delta-isomerase (96 aa).

Belongs to the muconolactone Delta-isomerase family. Homodecamer.

It catalyses the reaction (S)-muconolactone = (4,5-dihydro-5-oxofuran-2-yl)-acetate. It functions in the pathway aromatic compound metabolism; beta-ketoadipate pathway; 5-oxo-4,5-dihydro-2-furylacetate from catechol: step 3/3. The sequence is that of Muconolactone Delta-isomerase (catC) from Pseudomonas aeruginosa (strain ATCC 15692 / DSM 22644 / CIP 104116 / JCM 14847 / LMG 12228 / 1C / PRS 101 / PAO1).